Here is a 526-residue protein sequence, read N- to C-terminus: Inosine-5'-monophosphate dehydrogenase (526 aa).

CBS domains follow at residues F120–V179 and M183–S239. Residues D276–S278 and G326–G328 contribute to the NAD(+) site. K(+) contacts are provided by G328 and G330. An IMP-binding site is contributed by S331. C333 is a K(+) binding site. The active-site Thioimidate intermediate is the C333. IMP-binding positions include D366–G368 and G389–S390. The active-site Proton acceptor is R439. Residue Q451 coordinates IMP. S506 is a binding site for K(+). Positions S506–S526 are disordered. A compositionally biased stretch (basic and acidic residues) spans H517–S526.

This sequence belongs to the IMPDH/GMPR family. Homotetramer. It depends on K(+) as a cofactor.

It is found in the cytoplasm. The catalysed reaction is IMP + NAD(+) + H2O = XMP + NADH + H(+). The protein operates within secondary metabolite biosynthesis; terpenoid biosynthesis. With respect to regulation, mycophenolic acid (MPA) is a non-competitive inhibitor that prevents formation of the closed enzyme conformation by binding to the same site as the amobile flap. In contrast, mizoribine monophosphate (MZP) is a competitive inhibitor that induces the closed conformation. MPA is a potent inhibitor of mammalian IMPDHs but a poor inhibitor of the bacterial enzymes. MZP is a more potent inhibitor of bacterial IMPDH. In terms of biological role, catalyzes the conversion of inosine 5'-phosphate (IMP) to xanthosine 5'-phosphate (XMP), the first committed and rate-limiting step in the de novo synthesis of guanine nucleotides, and therefore plays an important role in the regulation of cell growth. Part of the gene cluster that mediates the biosynthesis of mycophenolic acid (MPA), the first isolated antibiotic natural product in the world. Does not play a role in the biosynthesis of MPA, but is involved in self resistance to MPA, since MPA acts as an inhibitor of IMP dehydrogenases. This is Inosine-5'-monophosphate dehydrogenase from Penicillium roqueforti (strain FM164).